We begin with the raw amino-acid sequence, 228 residues long: UPF0502 protein Rfer_1648 (228 aa).

It belongs to the UPF0502 family.

This Albidiferax ferrireducens (strain ATCC BAA-621 / DSM 15236 / T118) (Rhodoferax ferrireducens) protein is UPF0502 protein Rfer_1648.